Here is a 344-residue protein sequence, read N- to C-terminus: N-acetyl-gamma-glutamyl-phosphate reductase (344 aa).

Residue Cys148 is part of the active site.

It belongs to the NAGSA dehydrogenase family. Type 1 subfamily.

Its subcellular location is the cytoplasm. It catalyses the reaction N-acetyl-L-glutamate 5-semialdehyde + phosphate + NADP(+) = N-acetyl-L-glutamyl 5-phosphate + NADPH + H(+). It functions in the pathway amino-acid biosynthesis; L-arginine biosynthesis; N(2)-acetyl-L-ornithine from L-glutamate: step 3/4. Functionally, catalyzes the NADPH-dependent reduction of N-acetyl-5-glutamyl phosphate to yield N-acetyl-L-glutamate 5-semialdehyde. This Geobacillus kaustophilus (strain HTA426) protein is N-acetyl-gamma-glutamyl-phosphate reductase.